The sequence spans 220 residues: Metalloproteinase inhibitor 2 (220 aa).

Residues 1–26 (MGAAARSLRLALGLLLLATLLRPADA) form the signal peptide. Cysteine 27 lines the Zn(2+) pocket. Involved in metalloproteinase-binding regions lie at residues 27 to 30 (CSCS) and 95 to 96 (SA). Cystine bridges form between cysteine 27–cysteine 98, cysteine 29–cysteine 127, cysteine 39–cysteine 152, cysteine 154–cysteine 201, cysteine 159–cysteine 164, and cysteine 172–cysteine 193. One can recognise an NTR domain in the interval 27-152 (CSCSPVHPQQ…SLNHRYQMGC (126 aa)).

It belongs to the protease inhibitor I35 (TIMP) family. Interacts (via the C-terminal) with MMP2 (via the C-terminal PEX domain); the interaction inhibits the MMP2 activity. In terms of processing, the activity of TIMP2 is dependent on the presence of disulfide bonds.

The protein resides in the secreted. Complexes with metalloproteinases (such as collagenases) and irreversibly inactivates them by binding to their catalytic zinc cofactor. The polypeptide is Metalloproteinase inhibitor 2 (Timp2) (Rattus norvegicus (Rat)).